Here is a 232-residue protein sequence, read N- to C-terminus: Large ribosomal subunit protein uL1 (232 aa).

The protein belongs to the universal ribosomal protein uL1 family. Part of the 50S ribosomal subunit.

Functionally, binds directly to 23S rRNA. The L1 stalk is quite mobile in the ribosome, and is involved in E site tRNA release. In terms of biological role, protein L1 is also a translational repressor protein, it controls the translation of the L11 operon by binding to its mRNA. The chain is Large ribosomal subunit protein uL1 from Coxiella burnetii (strain RSA 331 / Henzerling II).